We begin with the raw amino-acid sequence, 369 residues long: Glutamate 5-kinase (369 aa).

Residue Lys-8 participates in ATP binding. Substrate-binding residues include Ser-49, Asp-136, and Asn-148. Residues 168-169 (TD) and 212-218 (TGGMMTK) contribute to the ATP site. One can recognise a PUA domain in the interval 277 to 355 (TGKLYLDSGA…KEISTILGYV (79 aa)).

It belongs to the glutamate 5-kinase family.

The protein resides in the cytoplasm. The enzyme catalyses L-glutamate + ATP = L-glutamyl 5-phosphate + ADP. Its pathway is amino-acid biosynthesis; L-proline biosynthesis; L-glutamate 5-semialdehyde from L-glutamate: step 1/2. Its function is as follows. Catalyzes the transfer of a phosphate group to glutamate to form L-glutamate 5-phosphate. This Trichormus variabilis (strain ATCC 29413 / PCC 7937) (Anabaena variabilis) protein is Glutamate 5-kinase.